The chain runs to 246 residues: MIVLKITSIGADISDNDTSCSRELIASLEASIPGLLDAGAESAALTNITGDDVVISAFVEDDMLETVNRAIVEILRDSSESLGDLEGISDEPDGAGEGISYAEAAVRQDRYPDAVILAFDTYGGEDFVADVANSAIAAARGMDGVTDVSQEIRPGVREIPGVGYVSDKTDDPVVAATIEDIESVGVAAGAMLGAALGHKNVHLVRRGSPSYVIPGSVIVSATAFLNGNLIDLAVPFEERTRILRVL.

This sequence to M.jannaschii MJ1676.

This is an uncharacterized protein from Methanothermobacter thermautotrophicus (strain ATCC 29096 / DSM 1053 / JCM 10044 / NBRC 100330 / Delta H) (Methanobacterium thermoautotrophicum).